Consider the following 307-residue polypeptide: Opsin-like protein carO (307 aa).

Residue asparagine 28 is glycosylated (N-linked (GlcNAc...) asparagine). Transmembrane regions (helical) follow at residues 36-56, 64-84, 118-138, 140-160, 166-186, 202-222, and 235-255; these read WYWA…GLGM, IFHY…FTMA, WFLT…MPWP, VLWV…GALV, WGYF…LAWE, FVMC…AWGV, and AVFY…LLLW. The tract at residues 280–307 is disordered; that stretch reads GPNNKVASGHGARNDTATASGSNVNPNA. Asparagine 293 carries an N-linked (GlcNAc...) asparagine glycan. Residues 294 to 307 show a composition bias toward polar residues; the sequence is DTATASGSNVNPNA.

It belongs to the archaeal/bacterial/fungal opsin family.

It is found in the membrane. In terms of biological role, opsin-like protein; part of the car gene cluster that mediates the biosynthesis of neurosporaxanthin, a carboxylic apocarotenoid acting as an essential protective pigment and leading to orange pigmentation. The exact role of carO in carotenoid biosynthesis is not known yet, but it could be involved in the regulation of the pathway by light or other stimuli. This chain is Opsin-like protein carO, found in Fusarium fujikuroi (Bakanae and foot rot disease fungus).